A 779-amino-acid chain; its full sequence is Molybdenum cofactor sulfurase (779 aa).

Lys247 is subject to N6-(pyridoxal phosphate)lysine. Cys409 is a catalytic residue. The MOSC domain maps to Ser624–Ser779. Ser732 is subject to Phosphoserine.

Belongs to the class-V pyridoxal-phosphate-dependent aminotransferase family. MOCOS subfamily. The cofactor is pyridoxal 5'-phosphate.

The enzyme catalyses Mo-molybdopterin + L-cysteine + AH2 = thio-Mo-molybdopterin + L-alanine + A + H2O. The protein operates within cofactor biosynthesis; molybdopterin biosynthesis. Its function is as follows. Sulfurates the molybdenum cofactor. Sulfation of molybdenum is essential for xanthine dehydrogenase (XDH) and aldehyde oxidase (ADO) enzymes in which molybdenum cofactor is liganded by 1 oxygen and 1 sulfur atom in active form. The polypeptide is Molybdenum cofactor sulfurase (Drosophila mojavensis (Fruit fly)).